The sequence spans 131 residues: Small ribosomal subunit protein uS11 (131 aa).

Belongs to the universal ribosomal protein uS11 family. Part of the 30S ribosomal subunit. Interacts with proteins S7 and S18. Binds to IF-3.

Located on the platform of the 30S subunit, it bridges several disparate RNA helices of the 16S rRNA. Forms part of the Shine-Dalgarno cleft in the 70S ribosome. The sequence is that of Small ribosomal subunit protein uS11 from Helicobacter pylori (strain P12).